Consider the following 291-residue polypeptide: Probable 2-(5''-triphosphoribosyl)-3'-dephosphocoenzyme-A synthase (291 aa).

Belongs to the CitG/MdcB family.

The enzyme catalyses 3'-dephospho-CoA + ATP = 2'-(5''-triphospho-alpha-D-ribosyl)-3'-dephospho-CoA + adenine. Involved in the formation of 2-(5''-phosphoribosyl)-3'-dephosphocoenzyme-A, the prosthetic group of the acyl-carrier protein of the malonate decarboxylase. This Pseudomonas syringae pv. syringae (strain B728a) protein is Probable 2-(5''-triphosphoribosyl)-3'-dephosphocoenzyme-A synthase.